A 165-amino-acid chain; its full sequence is Nucleotide-binding protein Syncc9902_1708 (165 aa).

The protein belongs to the YajQ family.

Nucleotide-binding protein. The polypeptide is Nucleotide-binding protein Syncc9902_1708 (Synechococcus sp. (strain CC9902)).